A 556-amino-acid polypeptide reads, in one-letter code: Urocanate hydratase (556 aa).

Residues 52–53 (GG), Q130, 176–178 (GMG), E196, R201, 242–243 (NA), 263–267 (QTSAH), 273–274 (YL), and Y322 contribute to the NAD(+) site. C410 is a catalytic residue. G492 lines the NAD(+) pocket.

The protein belongs to the urocanase family. It depends on NAD(+) as a cofactor.

The protein localises to the cytoplasm. The catalysed reaction is 4-imidazolone-5-propanoate = trans-urocanate + H2O. The protein operates within amino-acid degradation; L-histidine degradation into L-glutamate; N-formimidoyl-L-glutamate from L-histidine: step 2/3. Catalyzes the conversion of urocanate to 4-imidazolone-5-propionate. This chain is Urocanate hydratase, found in Bradyrhizobium sp. (strain BTAi1 / ATCC BAA-1182).